The chain runs to 256 residues: Pro-thyrotropin-releasing hormone (256 aa).

The first 24 residues, 1–24 (MQGPWLMMALALIFVLTGIPKSCA), serve as a signal peptide directing secretion. Disordered stretches follow at residues 76–128 (RQHP…EGDS) and 151–215 (VKRQ…HPCG). P79, P111, P156, and P174 each carry proline amide. Residues 104–113 (RPHKRQHPGR) are compositionally biased toward basic residues. Residues 177 to 188 (RFIDPELQRSWE) are compositionally biased toward basic and acidic residues. At P205 the chain carries Proline amide.

This sequence belongs to the TRH family. Specifically expressed in hypothalamus and testis.

The protein resides in the secreted. Functions as a regulator of the biosynthesis of TSH in the anterior pituitary gland and as a neurotransmitter/ neuromodulator in the central and peripheral nervous systems. This Mus musculus (Mouse) protein is Pro-thyrotropin-releasing hormone (Trh).